Reading from the N-terminus, the 305-residue chain is GMP synthase [glutamine-hydrolyzing] subunit B (305 aa).

One can recognise a GMPS ATP-PPase domain in the interval 2–185; it reads VDVDSFVEDA…LGLEEIISER (184 aa). 29–35 contributes to the ATP binding site; it reads SGGVDSS.

In terms of assembly, heterodimer composed of a glutamine amidotransferase subunit (A) and a GMP-binding subunit (B).

The catalysed reaction is XMP + L-glutamine + ATP + H2O = GMP + L-glutamate + AMP + diphosphate + 2 H(+). It functions in the pathway purine metabolism; GMP biosynthesis; GMP from XMP (L-Gln route): step 1/1. Its function is as follows. Catalyzes the synthesis of GMP from XMP. The sequence is that of GMP synthase [glutamine-hydrolyzing] subunit B from Halobacterium salinarum (strain ATCC 29341 / DSM 671 / R1).